A 583-amino-acid chain; its full sequence is Aspartate--tRNA ligase (583 aa).

L-aspartate is bound at residue E174. Residues 198 to 201 (QITK) form an aspartate region. Position 220 (R220) interacts with L-aspartate. Residues 220–222 (RDE) and Q229 each bind ATP. H443 contributes to the L-aspartate binding site. E477 lines the ATP pocket. R484 contributes to the L-aspartate binding site. 529-532 (GLDR) serves as a coordination point for ATP.

This sequence belongs to the class-II aminoacyl-tRNA synthetase family. Type 1 subfamily. As to quaternary structure, homodimer.

The protein localises to the cytoplasm. The enzyme catalyses tRNA(Asp) + L-aspartate + ATP = L-aspartyl-tRNA(Asp) + AMP + diphosphate. Its function is as follows. Catalyzes the attachment of L-aspartate to tRNA(Asp) in a two-step reaction: L-aspartate is first activated by ATP to form Asp-AMP and then transferred to the acceptor end of tRNA(Asp). This Streptococcus suis (strain 98HAH33) protein is Aspartate--tRNA ligase.